The sequence spans 376 residues: Erythronate-4-phosphate dehydrogenase (376 aa).

Substrate contacts are provided by S45 and T67. Residue D147 coordinates NAD(+). Residue R209 is part of the active site. D233 contacts NAD(+). Residue E238 is part of the active site. H255 acts as the Proton donor in catalysis. G258 is a binding site for NAD(+). Y259 is a binding site for substrate.

It belongs to the D-isomer specific 2-hydroxyacid dehydrogenase family. PdxB subfamily. In terms of assembly, homodimer.

The protein localises to the cytoplasm. The catalysed reaction is 4-phospho-D-erythronate + NAD(+) = (R)-3-hydroxy-2-oxo-4-phosphooxybutanoate + NADH + H(+). Its pathway is cofactor biosynthesis; pyridoxine 5'-phosphate biosynthesis; pyridoxine 5'-phosphate from D-erythrose 4-phosphate: step 2/5. Functionally, catalyzes the oxidation of erythronate-4-phosphate to 3-hydroxy-2-oxo-4-phosphonooxybutanoate. The protein is Erythronate-4-phosphate dehydrogenase of Shewanella loihica (strain ATCC BAA-1088 / PV-4).